We begin with the raw amino-acid sequence, 275 residues long: Large ribosomal subunit protein uL2 (275 aa).

2 disordered regions span residues 36-55 (PKKRGSGRNNNGHITVRHKG) and 223-275 (VVMN…RHAR).

The protein belongs to the universal ribosomal protein uL2 family. Part of the 50S ribosomal subunit. Forms a bridge to the 30S subunit in the 70S ribosome.

In terms of biological role, one of the primary rRNA binding proteins. Required for association of the 30S and 50S subunits to form the 70S ribosome, for tRNA binding and peptide bond formation. It has been suggested to have peptidyltransferase activity; this is somewhat controversial. Makes several contacts with the 16S rRNA in the 70S ribosome. The polypeptide is Large ribosomal subunit protein uL2 (Thiobacillus denitrificans (strain ATCC 25259 / T1)).